We begin with the raw amino-acid sequence, 125 residues long: Acyl carrier protein, mitochondrial (125 aa).

The N-terminal 36 residues, 1–36 (MFRSVCRISSRVAPSAYRTIMGRSVMSNTILAQRFY), are a transit peptide targeting the mitochondrion. The Carrier domain occupies 43 to 122 (DQVSQRVIDV…ETVDYIASNP (80 aa)). Ser82 bears the O-(pantetheine 4'-phosphoryl)serine mark.

This sequence belongs to the acyl carrier protein (ACP) family. Complex I is composed of about 30 different subunits. 4'-phosphopantetheine is transferred from CoA to a specific serine of apo-ACP by acpS. This modification is essential for activity because fatty acids are bound in thioester linkage to the sulfhydryl of the prosthetic group.

The protein localises to the mitochondrion. Its pathway is lipid metabolism; fatty acid biosynthesis. Functionally, carrier of the growing fatty acid chain in fatty acid biosynthesis. May be involved in the synthesis of very-long-chain fatty acids. Accessory and non-catalytic subunit of the mitochondrial membrane respiratory chain NADH dehydrogenase (Complex I), which functions in the transfer of electrons from NADH to the respiratory chain. The chain is Acyl carrier protein, mitochondrial (ACP1) from Saccharomyces cerevisiae (strain ATCC 204508 / S288c) (Baker's yeast).